Consider the following 286-residue polypeptide: Meteorin-like protein (286 aa).

Positions 1-21 are cleaved as a signal peptide; it reads MLSPFLAYLLSVVLLCRIARS. 5 disulfides stabilise this stretch: Cys-28–Cys-51, Cys-84–Cys-120, Cys-165–Cys-235, Cys-168–Cys-259, and Cys-178–Cys-281.

Belongs to the meteorin family.

The protein resides in the secreted. Functionally, hormone induced following exercise or cold exposure that promotes energy expenditure. Induced either in the skeletal muscle after exercise or in adipose tissue following cold exposure and is present in the circulation. Able to stimulate energy expenditure associated with the browning of the white fat depots and improves glucose tolerance. The sequence is that of Meteorin-like protein (metrnl) from Danio rerio (Zebrafish).